A 224-amino-acid polypeptide reads, in one-letter code: Phosphoglycolate phosphatase (224 aa).

Catalysis depends on aspartate 8, which acts as the Nucleophile. Mg(2+)-binding residues include aspartate 8 and aspartate 10. Substrate is bound at residue lysine 151. Residues aspartate 174 and aspartate 178 each coordinate Mg(2+).

This sequence belongs to the archaeal SPP-like hydrolase family. It depends on Mg(2+) as a cofactor.

It catalyses the reaction 2-phosphoglycolate + H2O = glycolate + phosphate. Catalyzes the dephosphorylation of 2-phosphoglycolate. The chain is Phosphoglycolate phosphatase from Thermoplasma volcanium (strain ATCC 51530 / DSM 4299 / JCM 9571 / NBRC 15438 / GSS1).